The following is a 188-amino-acid chain: Protein TIFY 9 (188 aa).

Residues 20-41 (DADDRHAKSGGSSASSSSSIRG) are disordered. The segment covering 28–38 (SGGSSASSSSS) has biased composition (low complexity). In terms of domain architecture, Tify spans 80–114 (AAAAAAPMTLFYNGSVAVFDVSHDKAEAIMRMATE). A Jas motif is present at residues 135–160 (PLTRTKSLQRFLSKRKERLTSLGPYQ). A disordered region spans residues 156–188 (LGPYQVGGPAAVGATTSTTTKSFLAKEEEHTAS). A compositionally biased stretch (basic and acidic residues) spans 179-188 (LAKEEEHTAS).

It belongs to the TIFY/JAZ family. Interacts with COI1A and COI2 in a coronatine-dependent manner. Coronatine is an analog of jasmonoyl isoleucine (JA-Ile). In terms of processing, ubiquitinated. Targeted for degradation by the SCF(COI1) E3 ubiquitin ligase-proteasome pathway during jasmonate signaling.

In terms of biological role, repressor of jasmonate responses. This is Protein TIFY 9 from Oryza sativa subsp. japonica (Rice).